The primary structure comprises 77 residues: MANIKSAIKRAELNKIANERNAQQKSAMRTLIKKFEAAPSEELYRAASSTIDKAASKGLIHANKASRDKARLAAKLG.

Belongs to the bacterial ribosomal protein bS20 family.

Functionally, binds directly to 16S ribosomal RNA. This Lactococcus lactis subsp. cremoris (strain MG1363) protein is Small ribosomal subunit protein bS20.